Reading from the N-terminus, the 126-residue chain is Aspartate 1-decarboxylase (126 aa).

Residue Ser25 is the Schiff-base intermediate with substrate; via pyruvic acid of the active site. Ser25 bears the Pyruvic acid (Ser) mark. Thr57 provides a ligand contact to substrate. The Proton donor role is filled by Tyr58. A substrate-binding site is contributed by Gly73–Ala75.

Belongs to the PanD family. As to quaternary structure, heterooctamer of four alpha and four beta subunits. Pyruvate serves as cofactor. Is synthesized initially as an inactive proenzyme, which is activated by self-cleavage at a specific serine bond to produce a beta-subunit with a hydroxyl group at its C-terminus and an alpha-subunit with a pyruvoyl group at its N-terminus.

The protein resides in the cytoplasm. It carries out the reaction L-aspartate + H(+) = beta-alanine + CO2. It participates in cofactor biosynthesis; (R)-pantothenate biosynthesis; beta-alanine from L-aspartate: step 1/1. In terms of biological role, catalyzes the pyruvoyl-dependent decarboxylation of aspartate to produce beta-alanine. This is Aspartate 1-decarboxylase from Acetivibrio thermocellus (strain ATCC 27405 / DSM 1237 / JCM 9322 / NBRC 103400 / NCIMB 10682 / NRRL B-4536 / VPI 7372) (Clostridium thermocellum).